The primary structure comprises 570 residues: Endo-1,4-beta-xylanase 4 (570 aa).

An N-terminal signal peptide occupies residues 1 to 24; sequence MKRFNYGFFHLVLFLISLLLLGSG. Asn92, Asn190, and Asn300 each carry an N-linked (GlcNAc...) asparagine glycan. Positions 195 to 494 constitute a GH10 domain; that stretch reads EGSVISIEQI…TQAGDLIDKL (300 aa). Glu325 acts as the Proton donor in catalysis. Asn339 carries N-linked (GlcNAc...) asparagine glycosylation. The active-site Nucleophile is the Glu432. N-linked (GlcNAc...) asparagine glycosylation is present at Asn545.

Belongs to the glycosyl hydrolase 10 (cellulase F) family.

It catalyses the reaction Endohydrolysis of (1-&gt;4)-beta-D-xylosidic linkages in xylans.. Its pathway is glycan degradation; xylan degradation. Its function is as follows. Binds to and hydrolyzes insoluble and soluble xylan substrates. The polypeptide is Endo-1,4-beta-xylanase 4 (Arabidopsis thaliana (Mouse-ear cress)).